A 298-amino-acid chain; its full sequence is ATP synthase F(1) complex subunit gamma, mitochondrial (298 aa).

The N-terminal 25 residues, 1–25 (MFSRAGVAGLSAWTVQPQWIQVRNM), are a transit peptide targeting the mitochondrion. Lysine 39 is modified (N6-acetyllysine). Residue lysine 49 is modified to N6-succinyllysine. Lysine 55 bears the N6-acetyllysine mark. Position 115 is an N6-acetyllysine; alternate (lysine 115). At lysine 115 the chain carries N6-succinyllysine; alternate. Serine 146 is subject to Phosphoserine. Lysine 154 is modified (N6-acetyllysine; alternate). N6-succinyllysine; alternate is present on lysine 154. N6-acetyllysine is present on lysine 197. Position 270 is an N6-succinyllysine (lysine 270).

Belongs to the ATPase gamma chain family. As to quaternary structure, component of the ATP synthase complex composed at least of ATP5F1A/subunit alpha, ATP5F1B/subunit beta, ATP5MC1/subunit c (homooctomer), MT-ATP6/subunit a, MT-ATP8/subunit 8, ATP5ME/subunit e, ATP5MF/subunit f, ATP5MG/subunit g, ATP5MK/subunit k, ATP5MJ/subunit j, ATP5F1C/subunit gamma, ATP5F1D/subunit delta, ATP5F1E/subunit epsilon, ATP5PF/subunit F6, ATP5PB/subunit b, ATP5PD/subunit d, ATP5PO/subunit OSCP. ATP synthase complex consists of a soluble F(1) head domain (subunits alpha(3) and beta(3)) - the catalytic core - and a membrane F(0) domain - the membrane proton channel (subunits c, a, 8, e, f, g, k and j). These two domains are linked by a central stalk (subunits gamma, delta, and epsilon) rotating inside the F1 region and a stationary peripheral stalk (subunits F6, b, d, and OSCP). Interacts with FLVCR2; this interaction occurs in the absence of heme and is disrupted upon heme binding.

It is found in the mitochondrion inner membrane. In terms of biological role, subunit gamma, of the mitochondrial membrane ATP synthase complex (F(1)F(0) ATP synthase or Complex V) that produces ATP from ADP in the presence of a proton gradient across the membrane which is generated by electron transport complexes of the respiratory chain. ATP synthase complex consist of a soluble F(1) head domain - the catalytic core - and a membrane F(1) domain - the membrane proton channel. These two domains are linked by a central stalk rotating inside the F(1) region and a stationary peripheral stalk. During catalysis, ATP synthesis in the catalytic domain of F(1) is coupled via a rotary mechanism of the central stalk subunits to proton translocation. In vivo, can only synthesize ATP although its ATP hydrolase activity can be activated artificially in vitro. With the central stalk subunit delta, is essential for the biogenesis of F(1) catalytic part of the ATP synthase complex namely in the formation of F1 assembly intermediate. The protein is ATP synthase F(1) complex subunit gamma, mitochondrial of Bos taurus (Bovine).